The chain runs to 361 residues: Phosphoribosylformylglycinamidine cyclo-ligase (361 aa).

Belongs to the AIR synthase family.

It is found in the cytoplasm. The enzyme catalyses 2-formamido-N(1)-(5-O-phospho-beta-D-ribosyl)acetamidine + ATP = 5-amino-1-(5-phospho-beta-D-ribosyl)imidazole + ADP + phosphate + H(+). It functions in the pathway purine metabolism; IMP biosynthesis via de novo pathway; 5-amino-1-(5-phospho-D-ribosyl)imidazole from N(2)-formyl-N(1)-(5-phospho-D-ribosyl)glycinamide: step 2/2. The sequence is that of Phosphoribosylformylglycinamidine cyclo-ligase from Bartonella quintana (strain Toulouse) (Rochalimaea quintana).